Consider the following 123-residue polypeptide: NHL-repeat-containing protein 4 (123 aa).

2 NHL repeats span residues 35–78 (QPLG…FPRA) and 79–119 (GPPI…YQGL).

The chain is NHL-repeat-containing protein 4 (NHLRC4) from Homo sapiens (Human).